A 51-amino-acid polypeptide reads, in one-letter code: Ribosome biogenesis protein Nop10 (51 aa).

This sequence belongs to the NOP10 family.

Functionally, involved in ribosome biogenesis; more specifically in 18S rRNA pseudouridylation and in cleavage of pre-rRNA. In Methanococcus maripaludis (strain C7 / ATCC BAA-1331), this protein is Ribosome biogenesis protein Nop10.